The following is a 193-amino-acid chain: MRLCDRDIEAWLDSGKLGIEPRPPVERINGATVDVRLGNQFRVFRGHTAAFIDLSGPKDEVSAALERVMSDEINLPEGEAFFLHPGELALAVTLESVTIPDDLVGWLDGRSSLARLGLMVHVTAHRIDPGWQGRIVLEFYNSGKLPLALRPGMLIGALSFEPLSGPAARPYNSRQDAKYRGQQGAVASRIDKD.

Residues 110-115 (RSSLAR), Asp128, 136-138 (VLE), Tyr171, Lys178, and Gln182 each bind dCTP. Residue Glu138 is the Proton donor/acceptor of the active site. A disordered region spans residues 169–193 (RPYNSRQDAKYRGQQGAVASRIDKD).

This sequence belongs to the dCTP deaminase family. As to quaternary structure, homotrimer.

The enzyme catalyses dCTP + H2O + H(+) = dUTP + NH4(+). It participates in pyrimidine metabolism; dUMP biosynthesis; dUMP from dCTP (dUTP route): step 1/2. Functionally, catalyzes the deamination of dCTP to dUTP. The chain is dCTP deaminase from Yersinia pestis bv. Antiqua (strain Antiqua).